The following is a 338-amino-acid chain: Anthranilate phosphoribosyltransferase (338 aa).

Residues glycine 78, 81–82 (GD), threonine 86, 88–91 (NIST), 106–114 (KHGNRSVSS), and serine 118 each bind 5-phospho-alpha-D-ribose 1-diphosphate. Glycine 78 contacts anthranilate. Serine 90 contacts Mg(2+). Asparagine 109 is a binding site for anthranilate. Position 164 (arginine 164) interacts with anthranilate. Residues aspartate 223 and glutamate 224 each contribute to the Mg(2+) site.

The protein belongs to the anthranilate phosphoribosyltransferase family. In terms of assembly, homodimer. Mg(2+) serves as cofactor.

It carries out the reaction N-(5-phospho-beta-D-ribosyl)anthranilate + diphosphate = 5-phospho-alpha-D-ribose 1-diphosphate + anthranilate. It functions in the pathway amino-acid biosynthesis; L-tryptophan biosynthesis; L-tryptophan from chorismate: step 2/5. Its function is as follows. Catalyzes the transfer of the phosphoribosyl group of 5-phosphorylribose-1-pyrophosphate (PRPP) to anthranilate to yield N-(5'-phosphoribosyl)-anthranilate (PRA). The polypeptide is Anthranilate phosphoribosyltransferase (Bacillus licheniformis (strain ATCC 14580 / DSM 13 / JCM 2505 / CCUG 7422 / NBRC 12200 / NCIMB 9375 / NCTC 10341 / NRRL NRS-1264 / Gibson 46)).